A 179-amino-acid chain; its full sequence is Proteasome chaperone 3 (179 aa).

It belongs to the PSMG3 family. As to quaternary structure, component of the 20S proteasome chaperone. Forms a heterodimer with POC4 that binds to proteasome precursors. Interacts with POP2.

Functionally, involved in 20S proteasome assembly, facilitating the alpha-ring formation. The sequence is that of Proteasome chaperone 3 (IRC25) from Saccharomyces cerevisiae (strain ATCC 204508 / S288c) (Baker's yeast).